A 500-amino-acid polypeptide reads, in one-letter code: MGIRMGRRLLFTLFLGALFCNGVYAKFTRYSFPKDFIFGTGSAAYQYEGAYKEGGKGPSVWDNFTHIPGKILNNDNGDVANDFYHRYKEDVSLLKDMNMDAFRFSIAWTRILPNGSLSGGINKEGVAFYNSLINDVIAKGMIPFVTIFHWDTPLALESKYGGFLSEDIVKEYVDFAEVCFREFGDRVKYWTTFNEPFTYSAYGYGKGVFAPGRCSSYVSKSCGVGDSSREPYLVAHHIHLSHAAAVQLYRTKYQPTQKGQIGMVVVTHWFVPYDNSDADRGAVQRSLDFIYGWFMDPIVHGDYPGTMRGWLGNRLPEFTPEQSAMVKGSYDFIGVNYYTTYYAKSIPPPNSNELSYDLDNRANTTGFRNGKPIGPQEFTPIFFNYPPGLRELLLYTKRRYNNPTIYVTENGIDEGNNSTLPEALKDGHRIEFHSKHLQFVNHAIKNGVNVKGYFTWTFMDCFEWGDGYLDRFGLIYVDRKTLKRYRKESSYWIEDFLKRH.

The N-terminal stretch at 1–25 (MGIRMGRRLLFTLFLGALFCNGVYA) is a signal peptide. Gln-46 serves as a coordination point for a beta-D-glucoside. 2 N-linked (GlcNAc...) asparagine glycosylation sites follow: Asn-63 and Asn-114. A beta-D-glucoside-binding positions include His-149 and 194–195 (NE). Glu-195 serves as the catalytic Proton donor. Cysteines 214 and 222 form a disulfide. Tyr-338 is an a beta-D-glucoside binding site. N-linked (GlcNAc...) asparagine glycosylation is present at Asn-363. Position 409 (Glu-409) interacts with a beta-D-glucoside. Catalysis depends on Glu-409, which acts as the Nucleophile. Asn-416 and Asn-417 each carry an N-linked (GlcNAc...) asparagine glycan. A beta-D-glucoside-binding positions include Trp-456, 463–464 (EW), and Phe-472.

It belongs to the glycosyl hydrolase 1 family.

The catalysed reaction is Hydrolysis of terminal, non-reducing beta-D-glucosyl residues with release of beta-D-glucose.. The polypeptide is Beta-glucosidase 30 (BGLU30) (Oryza sativa subsp. japonica (Rice)).